We begin with the raw amino-acid sequence, 115 residues long: Immunoglobulin kappa variable 5-2 (115 aa).

Positions 1–20 (MGSQVHLLSFLLLWISDTRA) are cleaved as a signal peptide. The framework-1 stretch occupies residues 21-43 (ETTLTQSPAFMSATPGDKVNISC). The region spanning 22–115 (TTLTQSPAFM…YFCLQHDNFP (94 aa)) is the Ig-like domain. Asn-40 carries an N-linked (GlcNAc...) asparagine glycan. Ser-42 carries the post-translational modification Phosphoserine. A disulfide bridge connects residues Cys-43 and Cys-108. Residues 44–54 (KASQDIDDDMN) are complementarity-determining-1. Residues 55 to 69 (WYQQKPGEAAIFIIQ) form a framework-2 region. A complementarity-determining-2 region spans residues 70 to 76 (EATTLVP). Positions 77-108 (GIPPRFSGSGYGTDFTLTINNIESEDAAYYFC) are framework-3. The tract at residues 109–115 (LQHDNFP) is complementarity-determining-3.

In terms of assembly, immunoglobulins are composed of two identical heavy chains and two identical light chains; disulfide-linked.

The protein resides in the secreted. The protein localises to the cell membrane. Its function is as follows. V region of the variable domain of immunoglobulin light chains that participates in the antigen recognition. Immunoglobulins, also known as antibodies, are membrane-bound or secreted glycoproteins produced by B lymphocytes. In the recognition phase of humoral immunity, the membrane-bound immunoglobulins serve as receptors which, upon binding of a specific antigen, trigger the clonal expansion and differentiation of B lymphocytes into immunoglobulins-secreting plasma cells. Secreted immunoglobulins mediate the effector phase of humoral immunity, which results in the elimination of bound antigens. The antigen binding site is formed by the variable domain of one heavy chain, together with that of its associated light chain. Thus, each immunoglobulin has two antigen binding sites with remarkable affinity for a particular antigen. The variable domains are assembled by a process called V-(D)-J rearrangement and can then be subjected to somatic hypermutations which, after exposure to antigen and selection, allow affinity maturation for a particular antigen. The chain is Immunoglobulin kappa variable 5-2 from Homo sapiens (Human).